The primary structure comprises 430 residues: Serine hydroxymethyltransferase (430 aa).

(6S)-5,6,7,8-tetrahydrofolate is bound by residues leucine 126 and 130-132 (GHL). Lysine 235 carries the N6-(pyridoxal phosphate)lysine modification.

The protein belongs to the SHMT family. As to quaternary structure, homodimer. Pyridoxal 5'-phosphate serves as cofactor.

The protein localises to the cytoplasm. It carries out the reaction (6R)-5,10-methylene-5,6,7,8-tetrahydrofolate + glycine + H2O = (6S)-5,6,7,8-tetrahydrofolate + L-serine. The protein operates within one-carbon metabolism; tetrahydrofolate interconversion. It functions in the pathway amino-acid biosynthesis; glycine biosynthesis; glycine from L-serine: step 1/1. Catalyzes the reversible interconversion of serine and glycine with tetrahydrofolate (THF) serving as the one-carbon carrier. This reaction serves as the major source of one-carbon groups required for the biosynthesis of purines, thymidylate, methionine, and other important biomolecules. Also exhibits THF-independent aldolase activity toward beta-hydroxyamino acids, producing glycine and aldehydes, via a retro-aldol mechanism. This Leifsonia xyli subsp. xyli (strain CTCB07) protein is Serine hydroxymethyltransferase.